The sequence spans 146 residues: Hemoglobin subunit beta/beta' (146 aa).

The Globin domain maps to 2-146 (HWSAEEKQLI…VAHALARKYH (145 aa)). Heme b is bound by residues His63 and His92.

It belongs to the globin family. As to quaternary structure, heterotetramer of two alpha chains and two beta chains. In terms of tissue distribution, red blood cells.

Involved in oxygen transport from the lung to the various peripheral tissues. This Chroicocephalus ridibundus (Black-headed gull) protein is Hemoglobin subunit beta/beta' (HBB).